A 423-amino-acid polypeptide reads, in one-letter code: WD repeat and SOCS box-containing protein 1 (423 aa).

The disordered stretch occupies residues 76–100; sequence DRSSGAGPRRLSRQNSEGSLLPGEP. 5 WD repeats span residues 125–166, 169–209, 213–252, 255–294, and 310–347; these read SRCV…LLLN, DHTD…NMVK, GHQN…LIRK, GHHN…VLLE, and ANDR…KSPQ. In terms of domain architecture, SOCS box spans 373–423; the sequence is DGSVHFWASPRSIASLQHLCRMTLRRVMPTQQVYTLPIPFSMQDYLAYKTL.

In terms of assembly, component of a probable ECS E3 ubiquitin-protein ligase complex that contains the Elongin BC complex.

The protein operates within protein modification; protein ubiquitination. Probable substrate-recognition component of a SCF-like ECS (Elongin-Cullin-SOCS-box protein) E3 ubiquitin-protein ligase complex which mediates the ubiquitination and subsequent proteasomal degradation of target proteins. This is WD repeat and SOCS box-containing protein 1 (wsb1) from Danio rerio (Zebrafish).